The primary structure comprises 436 residues: MIINIKETTMVRPSQPTPSQRLWNSNLDLVVPRFHTPSVYFYRRPGNASDFFDARVLKEALGRALVPFYPMAGRLARDEDGRVEIDCNGEGVRFVVAETDSAIDEFGDFAPTMELKKLIPKVEYGDDISAFPLLVLQITHFKCGGTSLGVGMQHHVADGASGLHFINSWSDIARGLDIAVPPFIDRSLLRARDPPSPSFPHIEYQPAPSMNTSPAPIQDPTVKSDPTATAVSIFKLTKQQLDLLKSRVSAKYSSYALVAGHVWRCTSIARGLPDDQRTKLYCATDGRARLQPPLPSGYFGNVIFTATPVADAGEITGEDSGLEAAAGRIQRALMRMDDEYLRSALDYLELQPDLSKLVRGAHTFRCPNIGLTSWTRLPIHDADFGWGRPIFMGPGGIAYEGLAFMLPSSEGDGSLSIAISLQAEHMIKFQKLLYEI.

Active-site proton acceptor residues include histidine 154 and aspartate 383.

It belongs to the plant acyltransferase family. As to expression, mostly expressed in stems, and, to a lower extent, in bulbs.

Its pathway is phenylpropanoid metabolism. Functionally, hydroxycinnamoyl transferase that catalyzes the transfer of an acyl from p-coumaryol-CoA to various acyl acceptors. Can use feruloyl-CoA and caffeoyl-CoA as acyl donors. This chain is Hydroxycinnamoyltransferase, found in Narcissus pseudonarcissus (Daffodil).